The sequence spans 759 residues: DNA replication licensing factor mcm-5 (759 aa).

The region spanning 330–536 is the MCM domain; that stretch reads AYELIAKSIA…KDATLAKHVI (207 aa). Arg-370 is an ADP binding site. An Arginine finger motif is present at residues 511-514; that stretch reads SRFD.

This sequence belongs to the MCM family. Component of the mcm2-7 complex. The complex forms a toroidal hexameric ring with the proposed subunit order mcm2-mcm6-mcm4-mcm7-mcm3-mcm5 (By simililarity).

The protein resides in the nucleus. It localises to the cytoplasm. The protein localises to the cytosol. The enzyme catalyses ATP + H2O = ADP + phosphate + H(+). Its function is as follows. Acts as a component of the MCM2-7 complex (MCM complex) which is the replicative helicase essential for 'once per cell cycle' DNA replication initiation and elongation in eukaryotic cells. Core component of CDC45-MCM-GINS (CMG) helicase, the molecular machine that unwinds template DNA during replication, and around which the replisome is built. The active ATPase sites in the MCM2-7 ring are formed through the interaction surfaces of two neighboring subunits such that a critical structure of a conserved arginine finger motif is provided in trans relative to the ATP-binding site of the Walker A box of the adjacent subunit. The six ATPase active sites, however, are likely to contribute differentially to the complex helicase activity. The chain is DNA replication licensing factor mcm-5 (mcm-5) from Caenorhabditis elegans.